The sequence spans 119 residues: Hydrogenase maturation factor HypA (119 aa).

H2 is a Ni(2+) binding site. Zn(2+)-binding residues include C73, C76, C89, and C92.

This sequence belongs to the HypA/HybF family.

Functionally, involved in the maturation of [NiFe] hydrogenases. Required for nickel insertion into the metal center of the hydrogenase. This is Hydrogenase maturation factor HypA from Dehalococcoides mccartyi (strain ATCC BAA-2266 / KCTC 15142 / 195) (Dehalococcoides ethenogenes (strain 195)).